A 613-amino-acid polypeptide reads, in one-letter code: Proline--tRNA ligase (613 aa).

This sequence belongs to the class-II aminoacyl-tRNA synthetase family. ProS type 1 subfamily. As to quaternary structure, homodimer.

The protein resides in the cytoplasm. It carries out the reaction tRNA(Pro) + L-proline + ATP = L-prolyl-tRNA(Pro) + AMP + diphosphate. Catalyzes the attachment of proline to tRNA(Pro) in a two-step reaction: proline is first activated by ATP to form Pro-AMP and then transferred to the acceptor end of tRNA(Pro). As ProRS can inadvertently accommodate and process non-cognate amino acids such as alanine and cysteine, to avoid such errors it has two additional distinct editing activities against alanine. One activity is designated as 'pretransfer' editing and involves the tRNA(Pro)-independent hydrolysis of activated Ala-AMP. The other activity is designated 'posttransfer' editing and involves deacylation of mischarged Ala-tRNA(Pro). The misacylated Cys-tRNA(Pro) is not edited by ProRS. The polypeptide is Proline--tRNA ligase (Tropheryma whipplei (strain Twist) (Whipple's bacillus)).